The sequence spans 201 residues: MSTVDLARVGACVLKHAVTGEAVELRNLWQEQACVVAGLRRFGCMVCRWIARDLSNLKGLLDQHGVRLVGVGPEALGLQEFLDGGYFAGELYLDESKQFYKELGFKRYNSLSILPAALGKPVREVAAKAKAVGIQGNLSGDLLQSGGLLVVAKGGDKVLLHFVQKSPGDYAPLESILQALGISAEVGPSELPQCDEEACSR.

Tyrosine 108 carries the post-translational modification Phosphotyrosine.

The protein belongs to the peroxiredoxin-like PRXL2 family. Prostamide/prostaglandin F synthase subfamily.

It is found in the cytoplasm. It localises to the cytosol. The enzyme catalyses prostaglandin H2 + [thioredoxin]-dithiol = prostaglandin F2alpha + [thioredoxin]-disulfide. It catalyses the reaction prostamide F2alpha + [thioredoxin]-disulfide = prostamide H2 + [thioredoxin]-dithiol. Functionally, catalyzes the reduction of prostaglandin-ethanolamide H(2) (prostamide H(2)) to prostamide F(2alpha) with NADPH as proton donor. Also able to reduce prostaglandin H(2) to prostaglandin F(2alpha). This is Prostamide/prostaglandin F synthase (PRXL2B) from Bos taurus (Bovine).